The primary structure comprises 443 residues: tRNA modification GTPase MnmE (443 aa).

(6S)-5-formyl-5,6,7,8-tetrahydrofolate is bound by residues arginine 23, glutamate 82, and lysine 121. The 150-residue stretch at 215-364 folds into the TrmE-type G domain; that stretch reads GTSIVLAGHP…LKQFIQKWMQ (150 aa). Residue asparagine 225 coordinates K(+). GTP-binding positions include 225–230, 244–250, and 269–272; these read NVGKSS, TDIPGTT, and DSAG. Mg(2+) is bound at residue serine 229. Residues threonine 244, isoleucine 246, and threonine 249 each coordinate K(+). Residue threonine 250 coordinates Mg(2+). Lysine 443 provides a ligand contact to (6S)-5-formyl-5,6,7,8-tetrahydrofolate.

This sequence belongs to the TRAFAC class TrmE-Era-EngA-EngB-Septin-like GTPase superfamily. TrmE GTPase family. As to quaternary structure, homodimer. Heterotetramer of two MnmE and two MnmG subunits. The cofactor is K(+).

The protein localises to the cytoplasm. Its function is as follows. Exhibits a very high intrinsic GTPase hydrolysis rate. Involved in the addition of a carboxymethylaminomethyl (cmnm) group at the wobble position (U34) of certain tRNAs, forming tRNA-cmnm(5)s(2)U34. The chain is tRNA modification GTPase MnmE from Chlamydia caviae (strain ATCC VR-813 / DSM 19441 / 03DC25 / GPIC) (Chlamydophila caviae).